The following is a 124-amino-acid chain: MDIPISSRDFRGLQLACVALGLVAGSIIIGISVSKAAAAMGGVFIGAAVLGLLILAYPFLKARFNLDHILPTIGSLRIHPHPGADHGEGRSSTNGNKEGARSSLSTVSRTLEKLKPGTRGAEEC.

A run of 2 helical transmembrane segments spans residues 13 to 33 and 40 to 60; these read LQLA…GISV and MGGV…YPFL. Positions 80–124 are disordered; it reads PHPGADHGEGRSSTNGNKEGARSSLSTVSRTLEKLKPGTRGAEEC. Residues 90–109 are compositionally biased toward polar residues; sequence RSSTNGNKEGARSSLSTVSR. Residues 110-124 show a composition bias toward basic and acidic residues; the sequence is TLEKLKPGTRGAEEC.

The protein localises to the membrane. Its function is as follows. May play a role in stabilizing dense microtubular networks or in vesicular trafficking. The sequence is that of Kinocilin (KNCN) from Homo sapiens (Human).